Consider the following 1059-residue polypeptide: Kinesin-like protein KIN-7K, chloroplastic (1059 aa).

Composition is skewed to low complexity over residues 1–35 and 43–58; these read MSSRPSSSASSRRSSSPFSAGSRRPPTSSSSSAGS and PRSYSTASSVSSSSHF. The N-terminal 48 residues, 1–48, are a transit peptide targeting the chloroplast; that stretch reads MSSRPSSSASSRRSSSPFSAGSRRPPTSSSSSAGSYLTGRLMPRSYST. The interval 1 to 99 is disordered; that stretch reads MSSRPSSSAS…SPPSPVPFPS (99 aa). Gly residues predominate over residues 59 to 69; sequence FGGGGGSGGGS. Residues 70–87 are compositionally biased toward low complexity; that stretch reads RSTTPGRRGSSSSSLVGP. Residues 88–97 show a composition bias toward pro residues; it reads VPSPPSPVPF. The Kinesin motor domain maps to 114–431; it reads SISVTIRFRP…LKFASRAKRV (318 aa). 194 to 201 lines the ATP pocket; it reads GVTSSGKT. Residues 435–518 adopt a coiled-coil conformation; it reads AARNRMIDEK…IQRLTKLILV (84 aa). Positions 526–570 are disordered; it reads ALTDTSSHQRHNSVNEEDKVSTSQDSSMLVQNDSATKDSLSSASP. The segment covering 546-569 has biased composition (polar residues); sequence STSQDSSMLVQNDSATKDSLSSAS. 3 coiled-coil regions span residues 640–674, 700–781, and 862–910; these read EGTKNQIDNLEREIREKRRHMRALEQKLMESGEAS, ELEL…EENR, and LEDM…LEND. Residues 1013–1048 form an RING-type zinc finger; the sequence is CKVCFESATAAVLLPCRHFCLCKPCSLACSECPLCR.

It belongs to the TRAFAC class myosin-kinesin ATPase superfamily. Kinesin family. KIN-7 subfamily.

It localises to the plastid. Its subcellular location is the chloroplast. In Oryza sativa subsp. japonica (Rice), this protein is Kinesin-like protein KIN-7K, chloroplastic.